The following is a 985-amino-acid chain: Vacuolar membrane protease (985 aa).

Residues 1 to 20 (MASSRAQRFNPIAFTPWPVT) are Cytoplasmic-facing. Residues 21-41 (CITTIVYLALLIPILVINLVV) form a helical membrane-spanning segment. Topologically, residues 42 to 388 (PSAPETNPKG…MFGTAFAVFR (347 aa)) are vacuolar. 3 N-linked (GlcNAc...) asparagine glycosylation sites follow: Asn53, Asn116, and Asn119. The Zn(2+) site is built by His175 and Asp187. Glu221 serves as the catalytic Proton acceptor. Glu222 is a Zn(2+) binding site. N-linked (GlcNAc...) asparagine glycosylation is present at Asn238. Residues Glu247 and His320 each contribute to the Zn(2+) site. Residues 389–409 (LHTLFAISVALLVIAPLVIFV) traverse the membrane as a helical segment. Residues 410–440 (TNRMYLFSMSKSLEGTGDQVSLRGLRGFSRT) are Cytoplasmic-facing. Residues 441–461 (PIILVTATTIPICLAYLLEKV) form a helical membrane-spanning segment. Residues 462 to 470 (NPYIVHSSQ) are Vacuolar-facing. The chain crosses the membrane as a helical span at residues 471-491 (FSVWSMMFSAWIFLAWFLACA). The Cytoplasmic segment spans residues 492–502 (ADFFRPSALHR). Residues 503-523 (AYSYTWIFIATWIMLVINTVY) form a helical membrane-spanning segment. The Vacuolar segment spans residues 524–527 (ANQK). Residues 528–548 (GIAAGYFLLFYFAGAFLATWI) traverse the membrane as a helical segment. Topologically, residues 549–666 (SYLELFALPR…TLPRWTWVLQ (118 aa)) are cytoplasmic. Residues 563–612 (ARQTTGRRPSSLSSRLLTSSADELRSNASPSTAEFPGAAGEDTDPTESTS) form a disordered region. A compositionally biased stretch (low complexity) spans 566–582 (TTGRRPSSLSSRLLTSS). The helical transmembrane segment at 667–687 (LLLLAPIVLILVGQLALFLTA) threads the bilayer. The Vacuolar portion of the chain corresponds to 688–700 (SMCQVGSDGVSTF). A helical transmembrane segment spans residues 701 to 721 (VVYLACAVFTTLLCIPLFPLI). Residues 722–727 (HRFTYH) lie on the Cytoplasmic side of the membrane. Residues 728–748 (IPTFLFLVFIGTLIYNLVAFP) traverse the membrane as a helical segment. At 749 to 985 (FSPANRLKTF…VEASHSFTIQ (237 aa)) the chain is on the vacuolar side. N-linked (GlcNAc...) asparagine glycans are attached at residues Asn767, Asn795, and Asn839.

The protein belongs to the peptidase M28 family. Requires Zn(2+) as cofactor.

It is found in the vacuole membrane. In terms of biological role, may be involved in vacuolar sorting and osmoregulation. The chain is Vacuolar membrane protease from Ajellomyces capsulatus (strain G186AR / H82 / ATCC MYA-2454 / RMSCC 2432) (Darling's disease fungus).